A 193-amino-acid polypeptide reads, in one-letter code: Large ribosomal subunit protein uL18 (193 aa).

This sequence belongs to the universal ribosomal protein uL18 family. Part of the 50S ribosomal subunit. Contacts the 5S and 23S rRNAs.

This is one of the proteins that bind and probably mediate the attachment of the 5S RNA into the large ribosomal subunit, where it forms part of the central protuberance. This is Large ribosomal subunit protein uL18 from Methanococcus maripaludis (strain C5 / ATCC BAA-1333).